The following is a 291-amino-acid chain: ATP synthase gamma chain (291 aa).

It belongs to the ATPase gamma chain family. In terms of assembly, F-type ATPases have 2 components, CF(1) - the catalytic core - and CF(0) - the membrane proton channel. CF(1) has five subunits: alpha(3), beta(3), gamma(1), delta(1), epsilon(1). CF(0) has three main subunits: a, b and c.

Its subcellular location is the cell inner membrane. Its function is as follows. Produces ATP from ADP in the presence of a proton gradient across the membrane. The gamma chain is believed to be important in regulating ATPase activity and the flow of protons through the CF(0) complex. The polypeptide is ATP synthase gamma chain (Chlorobium phaeobacteroides (strain DSM 266 / SMG 266 / 2430)).